A 96-amino-acid chain; its full sequence is Co-chaperonin GroES (96 aa).

The protein belongs to the GroES chaperonin family. Heptamer of 7 subunits arranged in a ring. Interacts with the chaperonin GroEL.

The protein resides in the cytoplasm. In terms of biological role, together with the chaperonin GroEL, plays an essential role in assisting protein folding. The GroEL-GroES system forms a nano-cage that allows encapsulation of the non-native substrate proteins and provides a physical environment optimized to promote and accelerate protein folding. GroES binds to the apical surface of the GroEL ring, thereby capping the opening of the GroEL channel. This Photobacterium profundum (strain SS9) protein is Co-chaperonin GroES.